The sequence spans 144 residues: Large ribosomal subunit protein uL15 (144 aa).

Residues 1-57 are disordered; sequence MFLNTLRPGEGSKHAPKRVGRGIGSGLGKTGGRGHKGLKSRSGGSVKPGFEGGQMPL. A compositionally biased stretch (gly residues) spans 21-31; that stretch reads RGIGSGLGKTG.

Belongs to the universal ribosomal protein uL15 family. As to quaternary structure, part of the 50S ribosomal subunit.

Its function is as follows. Binds to the 23S rRNA. This chain is Large ribosomal subunit protein uL15, found in Marinomonas sp. (strain MWYL1).